A 475-amino-acid polypeptide reads, in one-letter code: UDP-N-acetylmuramate--L-alanine ligase (475 aa).

Position 118 to 124 (118 to 124) interacts with ATP; that stretch reads GTHGKTT.

Belongs to the MurCDEF family.

It localises to the cytoplasm. The catalysed reaction is UDP-N-acetyl-alpha-D-muramate + L-alanine + ATP = UDP-N-acetyl-alpha-D-muramoyl-L-alanine + ADP + phosphate + H(+). It functions in the pathway cell wall biogenesis; peptidoglycan biosynthesis. In terms of biological role, cell wall formation. In Thermosynechococcus vestitus (strain NIES-2133 / IAM M-273 / BP-1), this protein is UDP-N-acetylmuramate--L-alanine ligase.